The primary structure comprises 432 residues: 3-phosphoshikimate 1-carboxyvinyltransferase (432 aa).

Positions 23, 24, and 28 each coordinate 3-phosphoshikimate. Lys23 provides a ligand contact to phosphoenolpyruvate. Phosphoenolpyruvate-binding residues include Gly95 and Arg123. Ser167, Gln169, Asp316, and Lys343 together coordinate 3-phosphoshikimate. Residue Gln169 participates in phosphoenolpyruvate binding. Asp316 (proton acceptor) is an active-site residue. Phosphoenolpyruvate-binding residues include Arg347 and Arg391.

The protein belongs to the EPSP synthase family. In terms of assembly, monomer.

It localises to the cytoplasm. It carries out the reaction 3-phosphoshikimate + phosphoenolpyruvate = 5-O-(1-carboxyvinyl)-3-phosphoshikimate + phosphate. It functions in the pathway metabolic intermediate biosynthesis; chorismate biosynthesis; chorismate from D-erythrose 4-phosphate and phosphoenolpyruvate: step 6/7. In terms of biological role, catalyzes the transfer of the enolpyruvyl moiety of phosphoenolpyruvate (PEP) to the 5-hydroxyl of shikimate-3-phosphate (S3P) to produce enolpyruvyl shikimate-3-phosphate and inorganic phosphate. The protein is 3-phosphoshikimate 1-carboxyvinyltransferase of Limosilactobacillus fermentum (strain NBRC 3956 / LMG 18251) (Lactobacillus fermentum).